A 2495-amino-acid polypeptide reads, in one-letter code: Non-reducing polyketide synthase adrD (2495 aa).

The N-terminal acylcarrier protein transacylase domain (SAT) stretch occupies residues 14-252 (VVFGPQSSEI…HHSRHVTAVQ (239 aa)). The 422-residue stretch at 386–807 (VIPIAITGMG…GSNAALVVKQ (422 aa)) folds into the Ketosynthase family 3 (KS3) domain. Residues Cys551, His686, and His725 each act as for beta-ketoacyl synthase activity in the active site. A malonyl-CoA:ACP transacylase (MAT) domain region spans residues 913–1222 (LCFGGQNGNE…QALDLGGALA (310 aa)). The active-site For acyl/malonyl transferase activity is the Ser1000. Residues 1294 to 1422 (KEFVQLLTKQ…GEISLHPFGQ (129 aa)) form an N-terminal hotdog fold region. One can recognise a PKS/mFAS DH domain in the interval 1294 to 1601 (KEFVQLLTKQ…FTSVSIAGLS (308 aa)). Residues 1295–1600 (EFVQLLTKQP…TFTSVSIAGL (306 aa)) are product template (PT) domain. Residue His1325 is the Proton acceptor; for dehydratase activity of the active site. Residues 1450–1601 (ESSGLKGFAV…FTSVSIAGLS (152 aa)) form a C-terminal hotdog fold region. Asp1508 acts as the Proton donor; for dehydratase activity in catalysis. Positions 1651-1725 (SGHFMVVQEM…TLVQTIFPDA (75 aa)) constitute a Carrier domain. At Ser1685 the chain carries O-(pantetheine 4'-phosphoryl)serine. The interval 1887–2120 (QHTSEHNLLR…GFQWVDWTYN (234 aa)) is methyltransferase (CMeT) domain. The segment at 2150–2495 (YLMNEETIVY…YEFLRDHVRY (346 aa)) is thioesterase (TE) domain. Residues Ser2273 and Asp2432 each act as for thioesterase activity in the active site.

The catalysed reaction is 3 malonyl-CoA + acetyl-CoA + 2 S-adenosyl-L-methionine = 3,5-dimethylorsellinate + 2 S-adenosyl-L-homocysteine + 3 CO2 + 4 CoA. The protein operates within secondary metabolite biosynthesis; terpenoid biosynthesis. Its function is as follows. Non-reducing polyketide synthase; part of the gene cluster that mediates the biosynthesis of andrastins, meroterpenoid compounds that exhibit inhibitory activity against ras farnesyltransferase, suggesting that they could be promising leads for antitumor agents. The first step of the pathway is the synthesis of 3,5-dimethylorsellinic acid (DMOA) by the polyketide synthase adrD via condensation of one acetyl-CoA starter unit with 3 malonyl-CoA units and 2 methylations. DMAO is then converted to farnesyl-DMAO by the prenyltransferase adrG. The methyltransferase adrK catalyzes the methylation of the carboxyl group of farnesyl-DMAO to farnesyl-DMAO methyl ester which is further converted to epoxyfarnesyl-DMAO methyl ester by the FAD-dependent monooxygenase adrH. The terpene cyclase adrI then catalyzes the carbon skeletal rearrangement to generate the andrastin E, the first compound in the pathway having the andrastin scaffold, with the tetracyclic ring system. The post-cyclization tailoring enzymes adrF, adrE, adrJ, and adrA, are involved in the conversion of andrastin E into andrastin A. The short chain dehydrogenase adrF is responsible for the oxidation of the C-3 a hydroxyl group of andrastin E to yield the corresponding ketone, andrastin D. The ketoreductase adrE stereoselectively reduces the carbonyl moiety to reverse the stereochemistry of the C-3 position to yield andrastin F. The acetyltransferase adrJ is the acetyltransferase that attaches the acetyl group to the C-3 hydroxyl group of andrastin F to yield andrastin C. Finally, the cytochrome P450 monooxygenase adrA catalyzes two sequential oxidation reactions of the C-23 methyl group, to generate the corresponding alcohol andrastin B, and aldehyde andrastin A. This Penicillium roqueforti protein is Non-reducing polyketide synthase adrD.